We begin with the raw amino-acid sequence, 372 residues long: Flap endonuclease 1 (372 aa).

The N-domain stretch occupies residues 1-105 (MGVKGLNQLI…GELEKRLLRR (105 aa)). Mg(2+) is bound at residue aspartate 34. Positions 47 and 71 each coordinate DNA. Positions 87, 159, 161, 180, and 182 each coordinate Mg(2+). The interval 123–254 (EVLKFEKRLV…ATAFKLIKEH (132 aa)) is I-domain. A DNA-binding site is contributed by glutamate 159. DNA-binding residues include glycine 232 and aspartate 234. Aspartate 234 contacts Mg(2+). The segment at 339–347 (VQGRLDGFF) is interaction with PCNA. A compositionally biased stretch (basic and acidic residues) spans 353–366 (DDKKRKADPKESKA). The disordered stretch occupies residues 353-372 (DDKKRKADPKESKASKKKKK).

It belongs to the XPG/RAD2 endonuclease family. FEN1 subfamily. In terms of assembly, interacts with PCNA. Three molecules of RAD27 bind to one PCNA trimer with each molecule binding to one PCNA monomer. PCNA stimulates the nuclease activity without altering cleavage specificity. Mg(2+) serves as cofactor. Post-translationally, phosphorylated. Phosphorylation upon DNA damage induces relocalization to the nuclear plasma.

Its subcellular location is the nucleus. The protein localises to the nucleolus. It is found in the nucleoplasm. It localises to the mitochondrion. Functionally, structure-specific nuclease with 5'-flap endonuclease and 5'-3' exonuclease activities involved in DNA replication and repair. During DNA replication, cleaves the 5'-overhanging flap structure that is generated by displacement synthesis when DNA polymerase encounters the 5'-end of a downstream Okazaki fragment. It enters the flap from the 5'-end and then tracks to cleave the flap base, leaving a nick for ligation. Also involved in the long patch base excision repair (LP-BER) pathway, by cleaving within the apurinic/apyrimidinic (AP) site-terminated flap. Acts as a genome stabilization factor that prevents flaps from equilibrating into structures that lead to duplications and deletions. Also possesses 5'-3' exonuclease activity on nicked or gapped double-stranded DNA, and exhibits RNase H activity. Also involved in replication and repair of rDNA and in repairing mitochondrial DNA. The polypeptide is Flap endonuclease 1 (Candida albicans (strain WO-1) (Yeast)).